The following is a 412-amino-acid chain: Fringe glycosyltransferase (412 aa).

Residues 1–15 (MMSLTVLSPPQRFKR) are Cytoplasmic-facing. Residues 16-34 (ILQAMMLAVAVVYMTLLLY) form a helical; Signal-anchor for type II membrane protein membrane-spanning segment. The Lumenal segment spans residues 35–412 (QSAYGYPGIQ…FPYFSFCPPR (378 aa)). Arg-164 contributes to the substrate binding site. 2 disulfides stabilise this stretch: Cys-204-Cys-215 and Cys-233-Cys-297. Asp-237 provides a ligand contact to substrate. Asp-238 provides a ligand contact to Mn(2+). Asp-327 is a catalytic residue. A Mn(2+)-binding site is contributed by His-351. Residues Cys-400 and Cys-409 are joined by a disulfide bond.

It belongs to the glycosyltransferase 31 family. Requires Mn(2+) as cofactor. In terms of tissue distribution, expressed in dorsal cells.

The protein localises to the golgi apparatus membrane. It catalyses the reaction 3-O-(alpha-L-fucosyl)-L-threonyl-[EGF-like domain protein] + UDP-N-acetyl-alpha-D-glucosamine = 3-O-(N-acetyl-beta-D-glucosaminyl-(1-&gt;3)-alpha-L-fucosyl)-L-threonyl-[EGF-like domain protein] + UDP + H(+). The catalysed reaction is 3-O-(alpha-L-fucosyl)-L-seryl-[EGF-like domain protein] + UDP-N-acetyl-alpha-D-glucosamine = 3-O-(N-acetyl-beta-D-glucosaminyl-(1-&gt;3)-alpha-L-fucosyl)-L-seryl-[EGF-like domain protein] + UDP + H(+). Glycosyltransferase involved in the elongation of O-linked ligands to activate Notch signaling. Possesses fucose-specific beta-1,3-N-acetylglucosaminyltransferase activity; extends the O-linked fucose on the Notch EGF repeats. Boundary-specific cell-signaling molecule that is responsible for dorsal-ventral cell interactions during wing development. The protein is Fringe glycosyltransferase (fng) of Drosophila melanogaster (Fruit fly).